The chain runs to 422 residues: UDP-N-acetylglucosamine 1-carboxyvinyltransferase (422 aa).

22–23 (KN) is a phosphoenolpyruvate binding site. Position 94 (arginine 94) interacts with UDP-N-acetyl-alpha-D-glucosamine. The active-site Proton donor is the cysteine 118. Residue cysteine 118 is modified to 2-(S-cysteinyl)pyruvic acid O-phosphothioketal. UDP-N-acetyl-alpha-D-glucosamine is bound by residues 123–127 (RPVDL), aspartate 309, and isoleucine 331.

It belongs to the EPSP synthase family. MurA subfamily.

It localises to the cytoplasm. It catalyses the reaction phosphoenolpyruvate + UDP-N-acetyl-alpha-D-glucosamine = UDP-N-acetyl-3-O-(1-carboxyvinyl)-alpha-D-glucosamine + phosphate. It functions in the pathway cell wall biogenesis; peptidoglycan biosynthesis. Functionally, cell wall formation. Adds enolpyruvyl to UDP-N-acetylglucosamine. The polypeptide is UDP-N-acetylglucosamine 1-carboxyvinyltransferase (Cereibacter sphaeroides (strain ATCC 17029 / ATH 2.4.9) (Rhodobacter sphaeroides)).